The chain runs to 145 residues: UPF0763 protein WS1752 (145 aa).

The protein belongs to the UPF0763 family.

The protein is UPF0763 protein WS1752 of Wolinella succinogenes (strain ATCC 29543 / DSM 1740 / CCUG 13145 / JCM 31913 / LMG 7466 / NCTC 11488 / FDC 602W) (Vibrio succinogenes).